Reading from the N-terminus, the 471-residue chain is Cysteine--tRNA ligase (471 aa).

Residue Cys-29 participates in Zn(2+) binding. Residues 31–41 (PTVYNYIHIGN) carry the 'HIGH' region motif. Zn(2+) is bound by residues Cys-209, His-234, and Glu-238. The 'KMSKS' region motif lies at 266–270 (KMSKS). Lys-269 contacts ATP.

It belongs to the class-I aminoacyl-tRNA synthetase family. Monomer. It depends on Zn(2+) as a cofactor.

It is found in the cytoplasm. It carries out the reaction tRNA(Cys) + L-cysteine + ATP = L-cysteinyl-tRNA(Cys) + AMP + diphosphate. The polypeptide is Cysteine--tRNA ligase (Listeria monocytogenes serovar 1/2a (strain ATCC BAA-679 / EGD-e)).